The primary structure comprises 245 residues: tRNA1(Val) (adenine(37)-N6)-methyltransferase (245 aa).

This sequence belongs to the methyltransferase superfamily. tRNA (adenine-N(6)-)-methyltransferase family.

It is found in the cytoplasm. It catalyses the reaction adenosine(37) in tRNA1(Val) + S-adenosyl-L-methionine = N(6)-methyladenosine(37) in tRNA1(Val) + S-adenosyl-L-homocysteine + H(+). Its function is as follows. Specifically methylates the adenine in position 37 of tRNA(1)(Val) (anticodon cmo5UAC). This is tRNA1(Val) (adenine(37)-N6)-methyltransferase from Escherichia coli O7:K1 (strain IAI39 / ExPEC).